A 466-amino-acid polypeptide reads, in one-letter code: cAMP-dependent protein kinase regulatory subunit (466 aa).

The segment at 25–231 is dimerization and phosphorylation; sequence QFAANYFTKR…RLEKAVGKNF (207 aa). Residues 71–80 are compositionally biased toward low complexity; the sequence is ASLSHGSSKA. 4 disordered regions span residues 71 to 90, 109 to 139, 154 to 179, and 193 to 218; these read ASLS…ISSS, STHI…PGIF, NSSV…VVNP, and SVSG…KSPE. Residues 81-90 show a composition bias toward polar residues; it reads NASQSGISSS. Positions 109 to 118 are enriched in basic and acidic residues; sequence STHIVDHLDS. Ser-193 carries the post-translational modification Phosphoserine. Residues 200-218 are compositionally biased toward basic and acidic residues; the sequence is QPDHLDDWKPENFQEKSPE. Residues 232–347, Glu-297, Arg-306, 350–466, Glu-416, and Arg-425 each bind 3',5'-cyclic AMP; these read LFNK…LLKN and ILKS…RSKH.

The protein belongs to the cAMP-dependent kinase regulatory chain family. Tetramer, composed of 2 regulatory (R) and 2 catalytic (C) subunits. In the presence of cAMP it dissociates into 2 active monomeric C subunits and an R dimer.

This chain is cAMP-dependent protein kinase regulatory subunit (PKAR), found in Kluyveromyces lactis (strain ATCC 8585 / CBS 2359 / DSM 70799 / NBRC 1267 / NRRL Y-1140 / WM37) (Yeast).